The sequence spans 314 residues: Methionyl-tRNA formyltransferase (314 aa).

Residue 110–113 (SLLP) coordinates (6S)-5,6,7,8-tetrahydrofolate.

The protein belongs to the Fmt family.

It catalyses the reaction L-methionyl-tRNA(fMet) + (6R)-10-formyltetrahydrofolate = N-formyl-L-methionyl-tRNA(fMet) + (6S)-5,6,7,8-tetrahydrofolate + H(+). Attaches a formyl group to the free amino group of methionyl-tRNA(fMet). The formyl group appears to play a dual role in the initiator identity of N-formylmethionyl-tRNA by promoting its recognition by IF2 and preventing the misappropriation of this tRNA by the elongation apparatus. This Lactobacillus gasseri (strain ATCC 33323 / DSM 20243 / BCRC 14619 / CIP 102991 / JCM 1131 / KCTC 3163 / NCIMB 11718 / NCTC 13722 / AM63) protein is Methionyl-tRNA formyltransferase.